The chain runs to 560 residues: Alpha-keto-acid decarboxylase (560 aa).

E61 is a thiamine diphosphate binding site. The interval 396–478 (TSFYGMADHR…VVVNNDGYTV (83 aa)) is thiamine pyrophosphate binding. D446, N473, and G475 together coordinate Mg(2+).

It belongs to the TPP enzyme family. Requires a metal cation as cofactor. Thiamine diphosphate is required as a cofactor.

Decarboxylates branched-chain and aromatic alpha-keto acids to aldehydes. This Mycobacterium bovis (strain ATCC BAA-935 / AF2122/97) protein is Alpha-keto-acid decarboxylase (kdc).